Consider the following 351-residue polypeptide: Adenine deaminase (351 aa).

Zn(2+)-binding residues include H20, H22, and H200. E203 functions as the Proton donor in the catalytic mechanism. D281 is a binding site for Zn(2+). D282 contacts substrate.

Belongs to the metallo-dependent hydrolases superfamily. Adenosine and AMP deaminases family. Adenine deaminase type 2 subfamily. Requires Zn(2+) as cofactor.

It carries out the reaction adenine + H2O + H(+) = hypoxanthine + NH4(+). Functionally, catalyzes the hydrolytic deamination of adenine to hypoxanthine. Plays an important role in the purine salvage pathway and in nitrogen catabolism. This is Adenine deaminase from Cupriavidus pinatubonensis (strain JMP 134 / LMG 1197) (Cupriavidus necator (strain JMP 134)).